The following is a 362-amino-acid chain: Phenylalanine--tRNA ligase alpha subunit (362 aa).

Glu-263 serves as a coordination point for Mg(2+).

This sequence belongs to the class-II aminoacyl-tRNA synthetase family. Phe-tRNA synthetase alpha subunit type 1 subfamily. In terms of assembly, tetramer of two alpha and two beta subunits. Mg(2+) serves as cofactor.

It localises to the cytoplasm. It carries out the reaction tRNA(Phe) + L-phenylalanine + ATP = L-phenylalanyl-tRNA(Phe) + AMP + diphosphate + H(+). This Caulobacter sp. (strain K31) protein is Phenylalanine--tRNA ligase alpha subunit.